The sequence spans 561 residues: uncharacterized protein (561 aa).

Residues M1–K11 are compositionally biased toward polar residues. Disordered regions lie at residues M1–R22 and C522–P561. The span at Q541–P561 shows a compositional bias: low complexity.

The protein to Synechocystis PCC 6803 sll0335 and to M.tuberculosis Rv2567.

This is an uncharacterized protein from Mycobacterium leprae (strain TN).